Consider the following 209-residue polypeptide: Thymidylate kinase (209 aa).

ATP is bound at residue 11-18 (GPDGAGKT).

This sequence belongs to the thymidylate kinase family.

It carries out the reaction dTMP + ATP = dTDP + ADP. Functionally, phosphorylation of dTMP to form dTDP in both de novo and salvage pathways of dTTP synthesis. The sequence is that of Thymidylate kinase from Streptococcus thermophilus (strain ATCC BAA-250 / LMG 18311).